The sequence spans 236 residues: 2-C-methyl-D-erythritol 4-phosphate cytidylyltransferase (236 aa).

This sequence belongs to the IspD/TarI cytidylyltransferase family. IspD subfamily.

It catalyses the reaction 2-C-methyl-D-erythritol 4-phosphate + CTP + H(+) = 4-CDP-2-C-methyl-D-erythritol + diphosphate. It participates in isoprenoid biosynthesis; isopentenyl diphosphate biosynthesis via DXP pathway; isopentenyl diphosphate from 1-deoxy-D-xylulose 5-phosphate: step 2/6. Its function is as follows. Catalyzes the formation of 4-diphosphocytidyl-2-C-methyl-D-erythritol from CTP and 2-C-methyl-D-erythritol 4-phosphate (MEP). The sequence is that of 2-C-methyl-D-erythritol 4-phosphate cytidylyltransferase from Burkholderia vietnamiensis (strain G4 / LMG 22486) (Burkholderia cepacia (strain R1808)).